Reading from the N-terminus, the 504-residue chain is ATP synthase subunit alpha 1 (504 aa).

172–179 (GDRQTGKT) is a binding site for ATP.

Belongs to the ATPase alpha/beta chains family. In terms of assembly, F-type ATPases have 2 components, CF(1) - the catalytic core - and CF(0) - the membrane proton channel. CF(1) has five subunits: alpha(3), beta(3), gamma(1), delta(1), epsilon(1). CF(0) has three main subunits: a(1), b(2) and c(9-12). The alpha and beta chains form an alternating ring which encloses part of the gamma chain. CF(1) is attached to CF(0) by a central stalk formed by the gamma and epsilon chains, while a peripheral stalk is formed by the delta and b chains.

The protein localises to the cell inner membrane. It catalyses the reaction ATP + H2O + 4 H(+)(in) = ADP + phosphate + 5 H(+)(out). Functionally, produces ATP from ADP in the presence of a proton gradient across the membrane. The alpha chain is a regulatory subunit. The polypeptide is ATP synthase subunit alpha 1 (Rhodopirellula baltica (strain DSM 10527 / NCIMB 13988 / SH1)).